A 447-amino-acid chain; its full sequence is Na(+)/H(+) antiporter NhaA 2 (447 aa).

The next 11 membrane-spanning stretches (helical) occupy residues 30 to 50 (FIHI…LAVL), 81 to 101 (LHKW…ALEL), 117 to 137 (LLSI…YLLL), 146 to 166 (GWGT…ALLG), 175 to 195 (IFML…VAIG), 199 to 219 (AVDW…RAMA), 220 to 240 (FLGV…WLVI), 315 to 335 (LLHP…NAGV), 350 to 370 (VFVG…WIAV), 383 to 403 (WGMV…ALFI), and 415 to 435 (AAKL…FLCL).

It belongs to the NhaA Na(+)/H(+) (TC 2.A.33) antiporter family.

It is found in the cell inner membrane. The catalysed reaction is Na(+)(in) + 2 H(+)(out) = Na(+)(out) + 2 H(+)(in). Na(+)/H(+) antiporter that extrudes sodium in exchange for external protons. The sequence is that of Na(+)/H(+) antiporter NhaA 2 from Vibrio vulnificus (strain CMCP6).